We begin with the raw amino-acid sequence, 65 residues long: Large ribosomal subunit protein bL35 (65 aa).

The protein belongs to the bacterial ribosomal protein bL35 family.

The protein is Large ribosomal subunit protein bL35 of Enterobacter sp. (strain 638).